Reading from the N-terminus, the 121-residue chain is MLKCTTRHVHIFAGEVTADNHFVPRDDLLTLDVDPDNELVWNDAALQKVYARFEELVEEYRGRDLTEYNLRRIGSDLEHFIRSLLKQGEIAYNLQGRTPNYSMGFPQIPAEEIVGQYIPKG.

Belongs to the complex I NdhM subunit family. NDH-1 can be composed of about 15 different subunits; different subcomplexes with different compositions have been identified which probably have different functions.

Its subcellular location is the cellular thylakoid membrane. The enzyme catalyses a plastoquinone + NADH + (n+1) H(+)(in) = a plastoquinol + NAD(+) + n H(+)(out). It carries out the reaction a plastoquinone + NADPH + (n+1) H(+)(in) = a plastoquinol + NADP(+) + n H(+)(out). In terms of biological role, NDH-1 shuttles electrons from an unknown electron donor, via FMN and iron-sulfur (Fe-S) centers, to quinones in the respiratory and/or the photosynthetic chain. The immediate electron acceptor for the enzyme in this species is believed to be plastoquinone. Couples the redox reaction to proton translocation, and thus conserves the redox energy in a proton gradient. Cyanobacterial NDH-1 also plays a role in inorganic carbon-concentration. The chain is NAD(P)H-quinone oxidoreductase subunit M from Synechococcus sp. (strain JA-3-3Ab) (Cyanobacteria bacterium Yellowstone A-Prime).